The chain runs to 193 residues: Peptidyl-tRNA hydrolase (193 aa).

Tyr-16 contributes to the tRNA binding site. His-21 acts as the Proton acceptor in catalysis. Phe-67, Asn-69, and Asn-115 together coordinate tRNA.

This sequence belongs to the PTH family. Monomer.

It localises to the cytoplasm. It carries out the reaction an N-acyl-L-alpha-aminoacyl-tRNA + H2O = an N-acyl-L-amino acid + a tRNA + H(+). Functionally, hydrolyzes ribosome-free peptidyl-tRNAs (with 1 or more amino acids incorporated), which drop off the ribosome during protein synthesis, or as a result of ribosome stalling. In terms of biological role, catalyzes the release of premature peptidyl moieties from peptidyl-tRNA molecules trapped in stalled 50S ribosomal subunits, and thus maintains levels of free tRNAs and 50S ribosomes. This Baumannia cicadellinicola subsp. Homalodisca coagulata protein is Peptidyl-tRNA hydrolase.